A 234-amino-acid chain; its full sequence is Glycoprotein BDLF3 (234 aa).

The signal sequence occupies residues 1–28; sequence MAHARDKAGAVMAMILICETSLIWTSSG. Positions 29 to 62 are disordered; it reads SSTASAGNVTGTTAVTTPSPSASGPSTNQSTTLT. N-linked (GlcNAc...) asparagine; by host glycans are attached at residues N36, N56, N77, N96, N101, N110, N127, N144, and N159. A disordered region spans residues 116-138; sequence AGTGTSTGVTSNVTTRSSSTTSA. The chain crosses the membrane as a helical span at residues 187–207; sequence LVFVGLTFLMLILIFAAGLMM.

Belongs to the Epstein-Barr virus BDLF3 protein family.

The protein resides in the membrane. The polypeptide is Glycoprotein BDLF3 (Homo sapiens (Human)).